Here is a 246-residue protein sequence, read N- to C-terminus: Bis(5'-nucleosyl)-tetraphosphatase PrpE [asymmetrical] (246 aa).

The protein belongs to the PrpE family. Ni(2+) is required as a cofactor.

The catalysed reaction is P(1),P(4)-bis(5'-guanosyl) tetraphosphate + H2O = GMP + GTP + 2 H(+). Asymmetrically hydrolyzes Ap4p to yield AMP and ATP. This Bacillus cereus (strain 03BB102) protein is Bis(5'-nucleosyl)-tetraphosphatase PrpE [asymmetrical].